We begin with the raw amino-acid sequence, 245 residues long: Endonuclease III (245 aa).

Positions 119–138 (MDKLVTLPGVGRKTANVILG) constitute a HhH domain. [4Fe-4S] cluster contacts are provided by cysteine 198, cysteine 205, cysteine 208, and cysteine 214.

It belongs to the Nth/MutY family. Requires [4Fe-4S] cluster as cofactor.

It catalyses the reaction 2'-deoxyribonucleotide-(2'-deoxyribose 5'-phosphate)-2'-deoxyribonucleotide-DNA = a 3'-end 2'-deoxyribonucleotide-(2,3-dehydro-2,3-deoxyribose 5'-phosphate)-DNA + a 5'-end 5'-phospho-2'-deoxyribonucleoside-DNA + H(+). In terms of biological role, DNA repair enzyme that has both DNA N-glycosylase activity and AP-lyase activity. The DNA N-glycosylase activity releases various damaged pyrimidines from DNA by cleaving the N-glycosidic bond, leaving an AP (apurinic/apyrimidinic) site. The AP-lyase activity cleaves the phosphodiester bond 3' to the AP site by a beta-elimination, leaving a 3'-terminal unsaturated sugar and a product with a terminal 5'-phosphate. Has a preference for oxidized pyrimidines, such as thymine glycol (prefers 5S isomers) 5,6-dihydrouracil:G, 5-hydroxyuracil:G, 5-hydroxycytosine:G and urea:A. Cleaves ssDNA containing an AP site. The sequence is that of Endonuclease III from Mycobacterium tuberculosis (strain ATCC 25618 / H37Rv).